Consider the following 112-residue polypeptide: ATP synthase epsilon chain (112 aa).

It belongs to the ATPase epsilon chain family. F-type ATPases have 2 components, CF(1) - the catalytic core - and CF(0) - the membrane proton channel. CF(1) has five subunits: alpha(3), beta(3), gamma(1), delta(1), epsilon(1). CF(0) has three main subunits: a, b and c.

It is found in the cell inner membrane. Produces ATP from ADP in the presence of a proton gradient across the membrane. This chain is ATP synthase epsilon chain (atpC), found in Rickettsia prowazekii (strain Madrid E).